Here is a 488-residue protein sequence, read N- to C-terminus: Serine hydroxymethyltransferase, mitochondrial (488 aa).

A mitochondrion-targeting transit peptide spans 1 to 20 (MAVLRQFVKNSYSSIPKRFY). Lysine 265 bears the N6-(pyridoxal phosphate)lysine mark.

This sequence belongs to the SHMT family. As to quaternary structure, homotetramer. Requires pyridoxal 5'-phosphate as cofactor.

The protein localises to the mitochondrion. The enzyme catalyses (6R)-5,10-methylene-5,6,7,8-tetrahydrofolate + glycine + H2O = (6S)-5,6,7,8-tetrahydrofolate + L-serine. Its pathway is one-carbon metabolism; tetrahydrofolate interconversion. Functionally, interconversion of serine and glycine. This Schizosaccharomyces pombe (strain 972 / ATCC 24843) (Fission yeast) protein is Serine hydroxymethyltransferase, mitochondrial (shm2).